A 378-amino-acid chain; its full sequence is Cysteine endopeptidase RepA (378 aa).

A signal peptide spans 1–24; it reads MLRCFLVAAAAVALAAAAAAPARA. The propeptide at 25-141 is activation peptide; that stretch reads IPFTESDLSS…SFRYGGDDED (117 aa). 3 disulfide bridges follow: Cys-164/Cys-206, Cys-198/Cys-239, and Cys-297/Cys-350. Cys-167 is a catalytic residue. Active-site residues include His-303 and Asn-324.

The protein belongs to the peptidase C1 family.

Its subcellular location is the protein storage vacuole. Cysteine endopeptidase that digests in vitro both the acidic and basic subunits of glutelin, the major seed storage protein of rice. In Oryza sativa subsp. japonica (Rice), this protein is Cysteine endopeptidase RepA.